The sequence spans 358 residues: Peptide chain release factor 1 (358 aa).

Position 234 is an N5-methylglutamine (Q234).

This sequence belongs to the prokaryotic/mitochondrial release factor family. Post-translationally, methylated by PrmC. Methylation increases the termination efficiency of RF1.

The protein localises to the cytoplasm. Functionally, peptide chain release factor 1 directs the termination of translation in response to the peptide chain termination codons UAG and UAA. This is Peptide chain release factor 1 from Chloroherpeton thalassium (strain ATCC 35110 / GB-78).